A 307-amino-acid chain; its full sequence is Streptomycin 6-kinase (307 aa).

Residue 133-145 participates in streptomycin binding; it reads LAGLLARLVSVPA. Asp201 (proton acceptor) is an active-site residue.

It belongs to the aminoglycoside phosphotransferase family.

The enzyme catalyses streptomycin + ATP = streptomycin 6-phosphate + ADP + H(+). Functionally, the aminoglycoside phosphotransferases achieve inactivation of their antibiotic substrates by phosphorylation. The chain is Streptomycin 6-kinase (sph) from Streptomyces glaucescens.